Here is a 97-residue protein sequence, read N- to C-terminus: MSSAPEPPTFKKEPPKEKDFQSPGLRGVRTTTLFRAVNPELFIKPNKPVMAFGLVTLSLCVAYIGYLHATQENKKDLYEAIDSEGHSYMRRKTSKWD.

A disordered region spans residues 1–24; the sequence is MSSAPEPPTFKKEPPKEKDFQSPG. Residues 9 to 20 show a composition bias toward basic and acidic residues; sequence TFKKEPPKEKDF. A helical membrane pass occupies residues 48–67; the sequence is PVMAFGLVTLSLCVAYIGYL.

It belongs to the SMIM8 family.

The protein resides in the membrane. This chain is Small integral membrane protein 8 (SMIM8), found in Pongo abelii (Sumatran orangutan).